Consider the following 84-residue polypeptide: Small ribosomal subunit protein eS27 (84 aa).

The C4-type zinc-finger motif lies at 38–60; the sequence is CPKCGATTTTFSHAHRQILCQKC.

This sequence belongs to the eukaryotic ribosomal protein eS27 family. Component of the small ribosomal subunit. It depends on Zn(2+) as a cofactor.

It localises to the cytoplasm. In terms of biological role, component of the small ribosomal subunit. The ribosome is a large ribonucleoprotein complex responsible for the synthesis of proteins in the cell. Required for proper rRNA processing and maturation of 18S rRNAs. This chain is Small ribosomal subunit protein eS27 (RPS27), found in Entamoeba histolytica (strain ATCC 30459 / HM-1:IMSS / ABRM).